A 428-amino-acid chain; its full sequence is Enolase (428 aa).

Gln163 is a (2R)-2-phosphoglycerate binding site. Glu205 functions as the Proton donor in the catalytic mechanism. Mg(2+) is bound by residues Asp242, Glu285, and Asp312. 4 residues coordinate (2R)-2-phosphoglycerate: Lys337, Arg366, Ser367, and Lys388. Catalysis depends on Lys337, which acts as the Proton acceptor.

The protein belongs to the enolase family. Mg(2+) serves as cofactor.

It localises to the cytoplasm. The protein resides in the secreted. It is found in the cell surface. The catalysed reaction is (2R)-2-phosphoglycerate = phosphoenolpyruvate + H2O. Its pathway is carbohydrate degradation; glycolysis; pyruvate from D-glyceraldehyde 3-phosphate: step 4/5. Functionally, catalyzes the reversible conversion of 2-phosphoglycerate (2-PG) into phosphoenolpyruvate (PEP). It is essential for the degradation of carbohydrates via glycolysis. This chain is Enolase, found in Neisseria meningitidis serogroup A / serotype 4A (strain DSM 15465 / Z2491).